The chain runs to 137 residues: MIWKRHLTLDELNATSQNTLVAHLGIVYTRLGDDVLEAEMPVDARTHQPFGLLHGGASAALAETLGSMAGYLMTRDGQCVVGTELNATHHRAISQGKVRGVCLPLHLGRQNQSWEITLFDEQGRRCCTCRLGTAVMG.

The Nucleophile or proton acceptor role is filled by glutamate 63.

This sequence belongs to the thioesterase PaaI family. As to quaternary structure, homotetramer. Dimer of dimers. Interacts specifically with the aryl carrier protein (ArCP) domain of EntB.

Its subcellular location is the cytoplasm. Its pathway is siderophore biosynthesis; enterobactin biosynthesis. Required for optimal enterobactin synthesis. Acts as a proofreading enzyme that prevents EntB misacylation by hydrolyzing the thioester bound existing between EntB and wrongly charged molecules. The polypeptide is Proofreading thioesterase EntH (Salmonella typhimurium (strain LT2 / SGSC1412 / ATCC 700720)).